The sequence spans 520 residues: 2-isopropylmalate synthase (520 aa).

The Pyruvate carboxyltransferase domain maps to 4–266 (VEFLDTTLRD…TSDIVLNETV (263 aa)). Positions 13, 201, 203, and 237 each coordinate Mn(2+). The interval 390–520 (HFGDLKLTSN…AVSFRDVPTN (131 aa)) is regulatory domain.

This sequence belongs to the alpha-IPM synthase/homocitrate synthase family. LeuA type 1 subfamily. In terms of assembly, homodimer. Mn(2+) serves as cofactor.

Its subcellular location is the cytoplasm. The catalysed reaction is 3-methyl-2-oxobutanoate + acetyl-CoA + H2O = (2S)-2-isopropylmalate + CoA + H(+). Its pathway is amino-acid biosynthesis; L-leucine biosynthesis; L-leucine from 3-methyl-2-oxobutanoate: step 1/4. Functionally, catalyzes the condensation of the acetyl group of acetyl-CoA with 3-methyl-2-oxobutanoate (2-ketoisovalerate) to form 3-carboxy-3-hydroxy-4-methylpentanoate (2-isopropylmalate). The chain is 2-isopropylmalate synthase from Streptococcus gallolyticus (strain UCN34).